The chain runs to 300 residues: ATP-dependent (S)-NAD(P)H-hydrate dehydratase (300 aa).

A YjeF C-terminal domain is found at L14 to D293. (6S)-NADPHX-binding positions include G114 and N167 to R173. ATP is bound by residues K198 to D202 and G219 to G228. D229 lines the (6S)-NADPHX pocket.

The protein belongs to the NnrD/CARKD family. Mg(2+) is required as a cofactor.

The enzyme catalyses (6S)-NADHX + ATP = ADP + phosphate + NADH + H(+). It carries out the reaction (6S)-NADPHX + ATP = ADP + phosphate + NADPH + H(+). In terms of biological role, catalyzes the dehydration of the S-form of NAD(P)HX at the expense of ATP, which is converted to ADP. Together with NAD(P)HX epimerase, which catalyzes the epimerization of the S- and R-forms, the enzyme allows the repair of both epimers of NAD(P)HX, a damaged form of NAD(P)H that is a result of enzymatic or heat-dependent hydration. In Drosophila pseudoobscura pseudoobscura (Fruit fly), this protein is ATP-dependent (S)-NAD(P)H-hydrate dehydratase.